We begin with the raw amino-acid sequence, 989 residues long: Mediator of RNA polymerase II transcription subunit 24 (989 aa).

Short sequence motifs (LXXLL motif) lie at residues 128–132 (LHWLL), 344–348 (LTPLL), 448–452 (LDLLL), 557–561 (LVALL), 788–792 (LPGLL), and 857–861 (LMRLL). Residues S862 and S873 each carry the phosphoserine modification.

Belongs to the Mediator complex subunit 24 family. Component of the Mediator complex, which is composed of MED1, MED4, MED6, MED7, MED8, MED9, MED10, MED11, MED12, MED13, MED13L, MED14, MED15, MED16, MED17, MED18, MED19, MED20, MED21, MED22, MED23, MED24, MED25, MED26, MED27, MED29, MED30, MED31, CCNC, CDK8 and CDC2L6/CDK11. The MED12, MED13, CCNC and CDK8 subunits form a distinct module termed the CDK8 module. Mediator containing the CDK8 module is less active than Mediator lacking this module in supporting transcriptional activation. Individual preparations of the Mediator complex lacking one or more distinct subunits have been variously termed ARC, CRSP, DRIP, PC2, SMCC and TRAP. Interacts with AR. In terms of tissue distribution, ubiquitous. Abundant in skeletal muscle, heart and placenta.

The protein resides in the nucleus. Component of the Mediator complex, a coactivator involved in the regulated transcription of nearly all RNA polymerase II-dependent genes. Mediator functions as a bridge to convey information from gene-specific regulatory proteins to the basal RNA polymerase II transcription machinery. Mediator is recruited to promoters by direct interactions with regulatory proteins and serves as a scaffold for the assembly of a functional preinitiation complex with RNA polymerase II and the general transcription factors. The polypeptide is Mediator of RNA polymerase II transcription subunit 24 (MED24) (Homo sapiens (Human)).